The following is a 457-amino-acid chain: MFEEPEWVEAAPAIVGLRPVTTQVQAATAPPVKGRKRRHLLATLRALEAASLSQQCPSLPGSDSEEEEEVGRKKRHFQRSSLANVSKEVGKKRKGKCQKQAPFISDSEGKEVERTCHRQAPPLGGISAGEEKGKRKCQEYSYLHPTQSLNSVDQTVHNSRTSTATLDPPKSSRESASPNSSHTLSRKQWRNRQKNKRRHKNKFRPLETQDQVPLKASIEETEVPPAPKSDSQETRAGALRARMTQRLDGARFRYLNEQLYSGPSSAAQCLFQEDPEAFLLYHRGFQRQVKKWPLHPVDRIAKDLRQKPASLVVADFGCGDCRLASSVRNPVHCFDLAALDPRVTVCDMAQVPLEDESVDVAVFCLSLMGTNIRDFLEEANRVLKPGGLLKVAEVSSRFEDIRTFLGAVTKLGFKVIYKDLTNSHFFLFDFEKTGPPRVGPKAQLSGLKLQPCLYKHR.

Disordered regions lie at residues 52-114 (LSQQ…EVER) and 148-235 (SLNS…QETR). Residues Ser-62, Ser-64, and Ser-105 each carry the phosphoserine modification. The span at 148–165 (SLNSVDQTVHNSRTSTAT) shows a compositional bias: polar residues. Ser-172 and Ser-177 each carry phosphoserine. Over residues 174–183 (ESASPNSSHT) the composition is skewed to polar residues. A compositionally biased stretch (basic residues) spans 184 to 203 (LSRKQWRNRQKNKRRHKNKF). S-adenosyl-L-methionine contacts are provided by His-282, Gly-317, Asp-335, Asp-347, Met-348, and Cys-364.

It belongs to the methyltransferase superfamily. RRP8 family. In terms of assembly, component of the eNoSC complex, composed of SIRT1, SUV39H1 and RRP8.

It is found in the nucleus. Its subcellular location is the nucleolus. Functionally, essential component of the eNoSC (energy-dependent nucleolar silencing) complex, a complex that mediates silencing of rDNA in response to intracellular energy status and acts by recruiting histone-modifying enzymes. The eNoSC complex is able to sense the energy status of cell: upon glucose starvation, elevation of NAD(+)/NADP(+) ratio activates SIRT1, leading to histone H3 deacetylation followed by dimethylation of H3 at 'Lys-9' (H3K9me2) by SUV39H1 and the formation of silent chromatin in the rDNA locus. In the complex, RRP8 binds to H3K9me2 and probably acts as a methyltransferase. Its substrates are however unknown. In Rattus norvegicus (Rat), this protein is Ribosomal RNA-processing protein 8 (Rrp8).